Consider the following 75-residue polypeptide: DNA-directed RNA polymerase subunit epsilon (75 aa).

This sequence belongs to the RNA polymerase subunit epsilon family. In terms of assembly, RNAP is composed of a core of 2 alpha, a beta and a beta' subunit. The core is associated with a delta subunit, and at least one of epsilon or omega. When a sigma factor is associated with the core the holoenzyme is formed, which can initiate transcription.

It carries out the reaction RNA(n) + a ribonucleoside 5'-triphosphate = RNA(n+1) + diphosphate. In terms of biological role, a non-essential component of RNA polymerase (RNAP). This is DNA-directed RNA polymerase subunit epsilon from Lactobacillus johnsonii (strain CNCM I-12250 / La1 / NCC 533).